The following is a 61-amino-acid chain: Large ribosomal subunit protein uL30 (61 aa).

It belongs to the universal ribosomal protein uL30 family. Part of the 50S ribosomal subunit.

The chain is Large ribosomal subunit protein uL30 from Shewanella piezotolerans (strain WP3 / JCM 13877).